The following is a 509-amino-acid chain: Putative ATP-dependent RNA helicase QP509L (509 aa).

Positions K110–P262 constitute a Helicase ATP-binding domain. L123 to T130 contributes to the ATP binding site. The short motif at D215–H218 is the DEAH box element.

It belongs to the DEAD box helicase family. DEAH subfamily.

The catalysed reaction is ATP + H2O = ADP + phosphate + H(+). The chain is Putative ATP-dependent RNA helicase QP509L from African swine fever virus (strain Badajoz 1971 Vero-adapted) (Ba71V).